The sequence spans 380 residues: Histone deacetylase-like amidohydrolase (380 aa).

The active-site Proton donor/acceptor is His-144. Asp-181, His-183, and Asp-269 together coordinate Zn(2+).

Belongs to the histone deacetylase family. In terms of assembly, homotetramer; dimer of head-to-head dimers. Zn(2+) serves as cofactor.

Its activity is regulated as follows. Is inhibited by azobenzenes, stilbenes and arylazopyrazoles. In terms of biological role, probable protein deacetylase that catalyzes deacetylation of acetylated lysine residues. In vitro, exhibits high activity against artificial HDAC (histone deacetylase) substrates containing acetylated and trifluoroacetylated lysine residues. Is not able to deacetylate acetylated polyamines. The polypeptide is Histone deacetylase-like amidohydrolase (Pseudomonas aeruginosa (strain ATCC 15692 / DSM 22644 / CIP 104116 / JCM 14847 / LMG 12228 / 1C / PRS 101 / PAO1)).